The following is a 307-amino-acid chain: Small ribosomal subunit biogenesis GTPase RsgA (307 aa).

In terms of domain architecture, CP-type G spans 85–242; it reads RQDAWKTKLI…LIDSPGLQEF (158 aa). GTP contacts are provided by residues 135–138 and 184–192; these read NKAD and GQSGMGKST. Zn(2+) contacts are provided by Cys-266, Cys-271, His-273, and Cys-279.

It belongs to the TRAFAC class YlqF/YawG GTPase family. RsgA subfamily. Monomer. Associates with 30S ribosomal subunit, binds 16S rRNA. Zn(2+) is required as a cofactor.

It is found in the cytoplasm. In terms of biological role, one of several proteins that assist in the late maturation steps of the functional core of the 30S ribosomal subunit. Helps release RbfA from mature subunits. May play a role in the assembly of ribosomal proteins into the subunit. Circularly permuted GTPase that catalyzes slow GTP hydrolysis, GTPase activity is stimulated by the 30S ribosomal subunit. This is Small ribosomal subunit biogenesis GTPase RsgA from Neisseria meningitidis serogroup C (strain 053442).